The following is a 435-amino-acid chain: Astacin-like metalloendopeptidase (435 aa).

Positions Met1–Gly23 are cleaved as a signal peptide. The Peptidase M12A domain maps to Arg85–Ser282. Cystine bridges form between Cys132/Cys281 and Cys153/Cys172. His182 is a Zn(2+) binding site. Residue Glu183 is part of the active site. Residues His186 and His192 each contribute to the Zn(2+) site. Over residues Ser318–Ser329 the composition is skewed to low complexity. The segment at Ser318 to Val356 is disordered. Polar residues predominate over residues Gly340–Ser355.

As to quaternary structure, interacts (via N-terminal domain) with SPACA3; the interaction occurs during fertilization. It depends on Zn(2+) as a cofactor. As to expression, ovary-specific. Expressed in secondary, antral and Graafian follicle oocytes. Expressed in the egg cells. Not detected in two-cell embryos. Not detected in naked oocytes, oocytes in primordial or unilaminar primary follicles, or in any other ovarian cells at pre-pubertal, pubertal or adult stages (at protein level). Ovary-specific.

The protein localises to the cytoplasm. It is found in the cell membrane. It localises to the cytoplasmic vesicle. Its subcellular location is the secretory vesicle. The protein resides in the cortical granule. With respect to regulation, inhibited by wide spectrum metalloproteinase inhibitor batimastat (BB-94). Also inhibited by EDTA. In terms of biological role, oocyte-specific oolemmal receptor involved in sperm and egg adhesion and fertilization. Plays a role in the polyspermy inhibition. Probably acts as a protease for the post-fertilization cleavage of ZP2. Cleaves the sperm-binding ZP2 at the surface of the zona pellucida after fertilization and cortical granule exocytosis, rendering the zona pellucida unable to support further sperm binding. This is Astacin-like metalloendopeptidase from Mus musculus (Mouse).